A 212-amino-acid polypeptide reads, in one-letter code: MSDLSDIRREYTQGGLRRANLPVNPMDLFEQWMQQAKDAQLSDPTAMCVATVDEDGQPFQRIVLLKKFDDNGFVFFTNLESRKAKQIATNSKISLLFPWHPLERQVAVLGEAEPLSMLDVAKYFMSRPKDSQIAAWVSKQSSKISARQALEGKFAEMKAKFAQGEVPLPKFWGGYLVRPASIEFWQGGEHRLHDRFIYTKTDADWNIDRLAP.

Residues 8-11 (RREY) and K66 contribute to the substrate site. FMN is bound by residues 61–66 (RIVLLK), 76–77 (FT), R82, K83, and Q105. Positions 123, 127, and 131 each coordinate substrate. FMN-binding positions include 140 to 141 (QS) and W185. 191–193 (RLH) serves as a coordination point for substrate. R195 provides a ligand contact to FMN.

Belongs to the pyridoxamine 5'-phosphate oxidase family. In terms of assembly, homodimer. It depends on FMN as a cofactor.

It catalyses the reaction pyridoxamine 5'-phosphate + O2 + H2O = pyridoxal 5'-phosphate + H2O2 + NH4(+). The enzyme catalyses pyridoxine 5'-phosphate + O2 = pyridoxal 5'-phosphate + H2O2. It participates in cofactor metabolism; pyridoxal 5'-phosphate salvage; pyridoxal 5'-phosphate from pyridoxamine 5'-phosphate: step 1/1. The protein operates within cofactor metabolism; pyridoxal 5'-phosphate salvage; pyridoxal 5'-phosphate from pyridoxine 5'-phosphate: step 1/1. Its function is as follows. Catalyzes the oxidation of either pyridoxine 5'-phosphate (PNP) or pyridoxamine 5'-phosphate (PMP) into pyridoxal 5'-phosphate (PLP). The chain is Pyridoxine/pyridoxamine 5'-phosphate oxidase from Shewanella frigidimarina (strain NCIMB 400).